The chain runs to 101 residues: NADH-quinone oxidoreductase subunit K (101 aa).

The next 3 helical transmembrane spans lie at 4–24 (LSHY…GIFI), 30–50 (IVIL…LVAF), and 65–85 (FVLT…VVFF).

It belongs to the complex I subunit 4L family. NDH-1 is composed of 14 different subunits. Subunits NuoA, H, J, K, L, M, N constitute the membrane sector of the complex.

It is found in the cell inner membrane. It carries out the reaction a quinone + NADH + 5 H(+)(in) = a quinol + NAD(+) + 4 H(+)(out). Functionally, NDH-1 shuttles electrons from NADH, via FMN and iron-sulfur (Fe-S) centers, to quinones in the respiratory chain. The immediate electron acceptor for the enzyme in this species is believed to be ubiquinone. Couples the redox reaction to proton translocation (for every two electrons transferred, four hydrogen ions are translocated across the cytoplasmic membrane), and thus conserves the redox energy in a proton gradient. This is NADH-quinone oxidoreductase subunit K from Methylobacterium sp. (strain 4-46).